Reading from the N-terminus, the 376-residue chain is Dihydroorotate dehydrogenase (quinone) (376 aa).

FMN-binding positions include 78-82 and T102; that span reads AGFDK. Residue K82 participates in substrate binding. A substrate-binding site is contributed by 127-131; it reads NRMGF. FMN contacts are provided by N157 and N190. N190 serves as a coordination point for substrate. The active-site Nucleophile is the S193. Substrate is bound at residue N195. K228 and T256 together coordinate FMN. Residue 257 to 258 participates in substrate binding; sequence NT. FMN contacts are provided by residues G286, G315, and 336-337; that span reads YT.

The protein belongs to the dihydroorotate dehydrogenase family. Type 2 subfamily. In terms of assembly, monomer. The cofactor is FMN.

It localises to the cell membrane. The enzyme catalyses (S)-dihydroorotate + a quinone = orotate + a quinol. The protein operates within pyrimidine metabolism; UMP biosynthesis via de novo pathway; orotate from (S)-dihydroorotate (quinone route): step 1/1. Catalyzes the conversion of dihydroorotate to orotate with quinone as electron acceptor. The protein is Dihydroorotate dehydrogenase (quinone) of Trichormus variabilis (strain ATCC 29413 / PCC 7937) (Anabaena variabilis).